We begin with the raw amino-acid sequence, 662 residues long: Polyadenylate-binding protein 4 (662 aa).

Residues 1–23 are disordered; that stretch reads MAQVQAPSSHSPPPPAVVNDGAA. 4 consecutive RRM domains span residues 46–124, 134–211, 225–302, and 328–405; these read CSLY…YSSR, GNLF…PFLR, TNVY…KAQK, and LNLY…LAQR. Low complexity-rich tracts occupy residues 480–489 and 506–518; these read PMMQPGQQGP and QQPMPYMQPQMMP. 2 disordered regions span residues 480–518 and 634–662; these read PMMQPGQQGPRPGGRRSGDGPMRHQHQQPMPYMQPQMMP and NQPSSQGSEGNKSGSPSDLLASLSINDHL. The region spanning 558–635 is the PABC domain; sequence SAGQLATSLA…ALDVLRNVNQ (78 aa). Residues 634–649 are compositionally biased toward polar residues; it reads NQPSSQGSEGNKSGSP.

It belongs to the polyadenylate-binding protein type-1 family. Interacts with ERD15/CID1. Interacts with Turnip mosaic virus (TuMV) VPg-Pro.

The protein localises to the cytoplasm. It is found in the nucleus. Functionally, binds the poly(A) tail of mRNA. Appears to be an important mediator of the multiple roles of the poly(A) tail in mRNA biogenesis, stability and translation. During infection with potyvirus TuMV, acts as a potential integral component of the viral replicase complex that could play an important role in the regulation of potyviral RNA-dependent RNA polymerase (RdRp). The chain is Polyadenylate-binding protein 4 (PAB4) from Arabidopsis thaliana (Mouse-ear cress).